Here is a 1915-residue protein sequence, read N- to C-terminus: Ankyrin repeat domain-containing protein 36A (1915 aa).

ANK repeat units follow at residues 31 to 60 (YHLKRIHRAVLHGNLEKLKYLLLTYYDANK), 64 to 93 (KERTALHLACATGQPEMVHLLVSRRCELNL), 97 to 126 (EDRTPLIKAVQLRQEACATLLLQNGANPNI), 130 to 159 (FGRTALHYAVYNEDTSMIEKLLSHGTNIEE), 163 to 192 (CEYQPLLFAVSRRKVKMVEFLLKKKANVNA), and 196 to 225 (LGRSALIHAVTLGEKDIVILLLQHNIDVLS). Disordered stretches follow at residues 261 to 331 (PINS…DEQK), 470 to 619 (ATGQ…QKQS), 639 to 663 (MGGGKSGTVSSQKQPASKATSDKTD), 676 to 1203 (LQCG…KATS), and 1285 to 1304 (KDVQTSTPAEQDLEMASEGE). 2 stretches are compositionally biased toward polar residues: residues 262 to 272 (INSNPVSSQKQ) and 297 to 306 (KSGTVSSQKQ). The span at 505–521 (SLTSSEESSERPPLSTL) shows a compositional bias: low complexity. Composition is skewed to basic and acidic residues over residues 551 to 562 (PAEKATSDDKDS) and 585 to 596 (PAEKATSDEKDS). 2 stretches are compositionally biased toward polar residues: residues 597–619 (VSNIATEIKKGQQSGTVSPQKQS) and 645–657 (GTVSSQKQPASKA). Basic and acidic residues-rich tracts occupy residues 806-815 (RENKDGEKSR), 874-883 (RENKDGEKSR), 931-951 (SDEKDSFSNITREKKDGEISR), 976-985 (RENKDGEKSR), 1044-1053 (RENKDGEKSR), 1100-1121 (TSDEKDSVLYIAREKKDGEKSR), and 1134-1152 (ICDKEDSVPNMATEKKDEQ). The span at 1175–1196 (VSNIPTEIKDGQQSGTVSSQKQ) shows a compositional bias: polar residues. Coiled coils occupy residues 1383–1466 (IKLK…TEEQ), 1504–1531 (KEDLLHENRLMQDEIARLRLEKDTIKNQ), 1573–1614 (LAAL…ARCD), and 1727–1814 (NMLL…KRDD). The disordered stretch occupies residues 1489 to 1508 (KTGGNNSNQVSETDEKEDLL).

The protein belongs to the ANKRD36 family.

The chain is Ankyrin repeat domain-containing protein 36A (ANKRD36) from Homo sapiens (Human).